The following is a 622-amino-acid chain: Kinesin-like protein KIFC1 (622 aa).

The tract at residues 1-88 (MKEALEPAKK…KRPGKRPDWD (88 aa)) is disordered. Residues 32–41 (SSLSQPQGPT) are compositionally biased toward polar residues. The stretch at 95-264 (DLTEELKCYR…QELKGNIRVF (170 aa)) forms a coiled coil. The region spanning 260 to 612 (NIRVFCRVRP…LRFASKVNQC (353 aa)) is the Kinesin motor domain. Residues 279 to 323 (PGFLLFPHGPAGPSDPPTRLSLSRSDDRRSTLTRAPAPTTRHDFS) form a disordered region. Position 309 is a phosphothreonine (Thr-309). 360-367 (GQTGSGKT) lines the ATP pocket.

It belongs to the TRAFAC class myosin-kinesin ATPase superfamily. Kinesin family. NCD subfamily. Binds NUBP1 and NUBP2. Interacts with PPP1R42.

It is found in the nucleus. It localises to the cytoplasm. Its subcellular location is the cytoskeleton. The protein resides in the microtubule organizing center. The protein localises to the centrosome. It is found in the spindle. It localises to the early endosome. Functionally, minus end-directed microtubule-dependent motor required for bipolar spindle formation. May contribute to movement of early endocytic vesicles. Regulates cilium formation and structure. The protein is Kinesin-like protein KIFC1 of Cricetulus griseus (Chinese hamster).